Reading from the N-terminus, the 1340-residue chain is TSET complex member tstE (1340 aa).

The span at 56–67 (NQSQTSPNSNDG) shows a compositional bias: low complexity. Disordered regions lie at residues 56 to 75 (NQSQ…GSGG) and 110 to 131 (SGSG…GGGQ). 4 WD repeats span residues 208–246 (VNQI…VIGK), 250–294 (DPTE…LQTI), 345–384 (GHKK…SFLN), and 397–436 (IEHS…NPQE). Polar residues predominate over residues 1216–1251 (KSHMSSTTTLRRSPSIENIRTTSTTFDSSKFNTDNQ). Positions 1216–1340 (KSHMSSTTTL…TPTPTTTLSS (125 aa)) are disordered. Residues 1252–1275 (ELFDDDSDDDSDSGADADVDSENE) show a composition bias toward acidic residues. A compositionally biased stretch (polar residues) spans 1286–1318 (ASLQHNDNSSLTNITVTDNDSNLDQDITSNTGS). Residues 1328–1340 (LSSTPTPTTTLSS) are compositionally biased toward low complexity.

Component of the TSET complex, a heterohexamer composed of tstA, tstB, tstC, tstD, tstE and tstF, which may act in plasma membrane turnover. tstA, tstB, tstC and tstD are likely to be the core complex members with tstE and tstF acting as associated scaffold proteins.

In Dictyostelium discoideum (Social amoeba), this protein is TSET complex member tstE.